A 98-amino-acid chain; its full sequence is Protein Asterix (98 aa).

The next 2 membrane-spanning stretches (helical) occupy residues 32–52 (LFSI…CLWV) and 78–98 (VSLS…NLFV).

The protein belongs to the Asterix family.

It is found in the membrane. The sequence is that of Protein Asterix from Dictyostelium discoideum (Social amoeba).